The sequence spans 159 residues: 2-C-methyl-D-erythritol 2,4-cyclodiphosphate synthase (159 aa).

2 residues coordinate a divalent metal cation: Asp-8 and His-10. 4-CDP-2-C-methyl-D-erythritol 2-phosphate is bound by residues 8–10 (DVH) and 34–35 (HS). His-42 lines the a divalent metal cation pocket. Residues 56–58 (DIG), 61–65 (FPDTD), 100–106 (AQAPKMA), 132–135 (TTTE), Phe-139, and Arg-142 each bind 4-CDP-2-C-methyl-D-erythritol 2-phosphate.

This sequence belongs to the IspF family. As to quaternary structure, homotrimer. The cofactor is a divalent metal cation.

The catalysed reaction is 4-CDP-2-C-methyl-D-erythritol 2-phosphate = 2-C-methyl-D-erythritol 2,4-cyclic diphosphate + CMP. It functions in the pathway isoprenoid biosynthesis; isopentenyl diphosphate biosynthesis via DXP pathway; isopentenyl diphosphate from 1-deoxy-D-xylulose 5-phosphate: step 4/6. Involved in the biosynthesis of isopentenyl diphosphate (IPP) and dimethylallyl diphosphate (DMAPP), two major building blocks of isoprenoid compounds. Catalyzes the conversion of 4-diphosphocytidyl-2-C-methyl-D-erythritol 2-phosphate (CDP-ME2P) to 2-C-methyl-D-erythritol 2,4-cyclodiphosphate (ME-CPP) with a corresponding release of cytidine 5-monophosphate (CMP). The protein is 2-C-methyl-D-erythritol 2,4-cyclodiphosphate synthase of Cronobacter sakazakii (strain ATCC BAA-894) (Enterobacter sakazakii).